A 229-amino-acid polypeptide reads, in one-letter code: Cytochrome c oxidase subunit 2 (229 aa).

At Met1–Tyr26 the chain is on the mitochondrial intermembrane side. Residues Thr27 to Ser48 traverse the membrane as a helical segment. Topologically, residues Ser49–Glu62 are mitochondrial matrix. A helical transmembrane segment spans residues Thr63–Gln82. The Mitochondrial intermembrane segment spans residues Leu83–Glu229. Cu cation contacts are provided by His161, Cys196, Glu198, Cys200, His204, and Met207. Glu198 contributes to the Mg(2+) binding site.

This sequence belongs to the cytochrome c oxidase subunit 2 family. Component of the cytochrome c oxidase (complex IV, CIV), a multisubunit enzyme composed of a catalytic core of 3 subunits and several supernumerary subunits. The complex exists as a monomer or a dimer and forms supercomplexes (SCs) in the inner mitochondrial membrane with ubiquinol-cytochrome c oxidoreductase (cytochrome b-c1 complex, complex III, CIII). Requires Cu cation as cofactor.

It is found in the mitochondrion inner membrane. The enzyme catalyses 4 Fe(II)-[cytochrome c] + O2 + 8 H(+)(in) = 4 Fe(III)-[cytochrome c] + 2 H2O + 4 H(+)(out). In terms of biological role, component of the cytochrome c oxidase, the last enzyme in the mitochondrial electron transport chain which drives oxidative phosphorylation. The respiratory chain contains 3 multisubunit complexes succinate dehydrogenase (complex II, CII), ubiquinol-cytochrome c oxidoreductase (cytochrome b-c1 complex, complex III, CIII) and cytochrome c oxidase (complex IV, CIV), that cooperate to transfer electrons derived from NADH and succinate to molecular oxygen, creating an electrochemical gradient over the inner membrane that drives transmembrane transport and the ATP synthase. Cytochrome c oxidase is the component of the respiratory chain that catalyzes the reduction of oxygen to water. Electrons originating from reduced cytochrome c in the intermembrane space (IMS) are transferred via the dinuclear copper A center (CU(A)) of subunit 2 and heme A of subunit 1 to the active site in subunit 1, a binuclear center (BNC) formed by heme A3 and copper B (CU(B)). The BNC reduces molecular oxygen to 2 water molecules using 4 electrons from cytochrome c in the IMS and 4 protons from the mitochondrial matrix. The sequence is that of Cytochrome c oxidase subunit 2 (COII) from Pisaster ochraceus (Ochre sea star).